The primary structure comprises 274 residues: Protein A11 homolog (274 aa).

A coiled-coil region spans residues Asp106 to Asn136.

Belongs to the poxviridae A11 family. Homomultimer. Interacts with A32. Phosphorylated by a F10-independent mechanism.

The protein resides in the host cytoplasm. In terms of biological role, required for viral crescent formation early during virus morphogenesis. In Fowlpox virus (strain NVSL) (FPV), this protein is Protein A11 homolog.